A 1073-amino-acid chain; its full sequence is uncharacterized protein (1073 aa).

The N-terminal stretch at 1 to 36 is a signal peptide; the sequence is MAEIIHHSNVFTWAFHVSEYDGAPLLLLGSFSSVAS. A glycan (N-linked (GlcNAc...) asparagine) is linked at asparagine 132. ATP is bound at residue 392–399; sequence ATAGIGKS. N-linked (GlcNAc...) asparagine glycans are attached at residues asparagine 544, asparagine 632, asparagine 703, asparagine 732, and asparagine 953.

This is an uncharacterized protein from Schizosaccharomyces pombe (strain 972 / ATCC 24843) (Fission yeast).